A 208-amino-acid polypeptide reads, in one-letter code: Transmembrane protein 222 (208 aa).

Residues 1-34 (MAEAEGSSPLLLQPPPPPPRMAEVETPTGAETDM) form a disordered region. At 1-55 (MAEAEGSSPLLLQPPPPPPRMAEVETPTGAETDMKQYHGSGGVVMDVERSRFPYC) the chain is on the extracellular side. The chain crosses the membrane as a helical span at residues 56-76 (VVWTPIPVLTWFFPIIGHMGI). Residues 77 to 164 (CTSAGVIRDF…MRYNNSTNWN (88 aa)) lie on the Cytoplasmic side of the membrane. The chain crosses the membrane as a helical span at residues 165–185 (MVTLCCFCLIYGKYVSVGAFV). A topological domain (extracellular) is located at residue Lys-186. The chain crosses the membrane as a helical span at residues 187–207 (TWLPFVLLLGIILTVSLVFNL). A topological domain (cytoplasmic) is located at residue Arg-208.

The protein localises to the membrane. The protein resides in the cell projection. It localises to the dendrite. The sequence is that of Transmembrane protein 222 (Tmem222) from Mus musculus (Mouse).